A 154-amino-acid polypeptide reads, in one-letter code: NADPH-dependent 7-cyano-7-deazaguanine reductase (154 aa).

Cys54 acts as the Thioimide intermediate in catalysis. Asp61 functions as the Proton donor in the catalytic mechanism. Substrate-binding positions include 76–78 (VES) and 95–96 (HE).

This sequence belongs to the GTP cyclohydrolase I family. QueF type 1 subfamily.

It is found in the cytoplasm. It carries out the reaction 7-aminomethyl-7-carbaguanine + 2 NADP(+) = 7-cyano-7-deazaguanine + 2 NADPH + 3 H(+). The protein operates within tRNA modification; tRNA-queuosine biosynthesis. In terms of biological role, catalyzes the NADPH-dependent reduction of 7-cyano-7-deazaguanine (preQ0) to 7-aminomethyl-7-deazaguanine (preQ1). In Porphyromonas gingivalis (strain ATCC 33277 / DSM 20709 / CIP 103683 / JCM 12257 / NCTC 11834 / 2561), this protein is NADPH-dependent 7-cyano-7-deazaguanine reductase.